The chain runs to 198 residues: Large ribosomal subunit protein uL13B (198 aa).

Ser2 bears the N-acetylserine; partial mark. Phosphoserine is present on Ser43. Residue Lys176 forms a Glycyl lysine isopeptide (Lys-Gly) (interchain with G-Cter in ubiquitin) linkage. Ser181, Ser185, and Ser187 each carry phosphoserine.

It belongs to the universal ribosomal protein uL13 family. As to quaternary structure, component of the large ribosomal subunit (LSU). Mature yeast ribosomes consist of a small (40S) and a large (60S) subunit. The 40S small subunit contains 1 molecule of ribosomal RNA (18S rRNA) and 33 different proteins (encoded by 57 genes). The large 60S subunit contains 3 rRNA molecules (25S, 5.8S and 5S rRNA) and 46 different proteins (encoded by 81 genes). In terms of processing, N-terminally acetylated by acetyltransferase NatA.

Its subcellular location is the cytoplasm. Functionally, component of the ribosome, a large ribonucleoprotein complex responsible for the synthesis of proteins in the cell. The small ribosomal subunit (SSU) binds messenger RNAs (mRNAs) and translates the encoded message by selecting cognate aminoacyl-transfer RNA (tRNA) molecules. The large subunit (LSU) contains the ribosomal catalytic site termed the peptidyl transferase center (PTC), which catalyzes the formation of peptide bonds, thereby polymerizing the amino acids delivered by tRNAs into a polypeptide chain. The nascent polypeptides leave the ribosome through a tunnel in the LSU and interact with protein factors that function in enzymatic processing, targeting, and the membrane insertion of nascent chains at the exit of the ribosomal tunnel. This is Large ribosomal subunit protein uL13B from Saccharomyces cerevisiae (strain ATCC 204508 / S288c) (Baker's yeast).